The following is a 720-amino-acid chain: Putative glutamine--fructose-6-phosphate aminotransferase [isomerizing] (720 aa).

Residue cysteine 2 is the Nucleophile; for GATase activity of the active site. The Glutamine amidotransferase type-2 domain occupies 2–321; sequence CGIFGYCNFL…DNDIAHIYDG (320 aa). Over residues 266–280 the composition is skewed to polar residues; that stretch reads STTSTFNHGSSTETP. A disordered region spans residues 266–285; the sequence is STTSTFNHGSSTETPAENGL. SIS domains are found at residues 393–532 and 565–710; these read WLTE…DLVS and CDKK…VDLP.

The enzyme catalyses D-fructose 6-phosphate + L-glutamine = D-glucosamine 6-phosphate + L-glutamate. It functions in the pathway nucleotide-sugar biosynthesis; UDP-N-acetyl-alpha-D-glucosamine biosynthesis; alpha-D-glucosamine 6-phosphate from D-fructose 6-phosphate: step 1/1. Involved in amino sugar synthesis (formation of chitin, supplies the amino sugars of asparagine-linked oligosaccharides of glycoproteins). In Saccharomyces cerevisiae (strain RM11-1a) (Baker's yeast), this protein is Putative glutamine--fructose-6-phosphate aminotransferase [isomerizing].